The chain runs to 376 residues: Histidinol dehydrogenase (376 aa).

Residues tyrosine 100 and asparagine 182 each contribute to the NAD(+) site. Serine 205, glutamine 227, and histidine 230 together coordinate substrate. Residues glutamine 227 and histidine 230 each contribute to the Zn(2+) site. Active-site proton acceptor residues include glutamate 275 and histidine 276. Residues histidine 276, aspartate 309, glutamate 363, and histidine 368 each coordinate substrate. Residue aspartate 309 coordinates Zn(2+). Residue histidine 368 participates in Zn(2+) binding.

This sequence belongs to the histidinol dehydrogenase family. Requires Zn(2+) as cofactor.

It carries out the reaction L-histidinol + 2 NAD(+) + H2O = L-histidine + 2 NADH + 3 H(+). Its pathway is amino-acid biosynthesis; L-histidine biosynthesis; L-histidine from 5-phospho-alpha-D-ribose 1-diphosphate: step 9/9. Catalyzes the sequential NAD-dependent oxidations of L-histidinol to L-histidinaldehyde and then to L-histidine. This chain is Histidinol dehydrogenase, found in Thermococcus kodakarensis (strain ATCC BAA-918 / JCM 12380 / KOD1) (Pyrococcus kodakaraensis (strain KOD1)).